The sequence spans 90 residues: Large ribosomal subunit protein bL27 (90 aa).

The disordered stretch occupies residues 1-20; that stretch reads MAHKKAGGSSRNGRDSAGKR.

The protein belongs to the bacterial ribosomal protein bL27 family.

The polypeptide is Large ribosomal subunit protein bL27 (Nitrobacter hamburgensis (strain DSM 10229 / NCIMB 13809 / X14)).